The primary structure comprises 183 residues: MSNTGSAVPQTTSSNPIVFFDVALGGEPLGRLKLELFADVTPRTAENFRQFCTGESKNQQGRPQGYKGSKFHRVIKDFMIQGGDFVNGDGTGSCTIYGTPKFSDENFTLRHDRPGLLSMANSGPNTNGCQFFITTTATPFLNGKHVVFGQVIDGMDIVRMIENTRTTRDKPNQDVVIIQCGEM.

In terms of domain architecture, PPIase cyclophilin-type spans 19 to 182 (FFDVALGGEP…QDVVIIQCGE (164 aa)).

The protein belongs to the cyclophilin-type PPIase family. PPIase H subfamily.

It is found in the nucleus. The catalysed reaction is [protein]-peptidylproline (omega=180) = [protein]-peptidylproline (omega=0). Functionally, PPIases accelerate the folding of proteins. It catalyzes the cis-trans isomerization of proline imidic peptide bonds in oligopeptides. In Emericella nidulans (strain FGSC A4 / ATCC 38163 / CBS 112.46 / NRRL 194 / M139) (Aspergillus nidulans), this protein is Peptidyl-prolyl cis-trans isomerase H (cyp3).